A 124-amino-acid chain; its full sequence is IHFFYLGLCLLTLTSSAAAGPETLCGAELVDALQFVCGDRGFYFSKPTGYGSSSRRLHHKGIVDECCFQSCDLRRLEMYCAPIKPPKSARSVRAQRHTDMPKAQKEVHLKNTSRGNTGNRNYRM.

Residues 1–19 (IHFFYLGLCLLTLTSSAAA) constitute a propeptide that is removed on maturation. The interval 20 to 48 (GPETLCGAELVDALQFVCGDRGFYFSKPT) is b. 3 disulfides stabilise this stretch: C25/C67, C37/C80, and C66/C71. The segment at 49–60 (GYGSSSRRLHHK) is c. Residues 61 to 81 (GIVDECCFQSCDLRRLEMYCA) form an a region. The tract at residues 82-89 (PIKPPKSA) is d. The disordered stretch occupies residues 86–124 (PKSARSVRAQRHTDMPKAQKEVHLKNTSRGNTGNRNYRM). The propeptide at 90–124 (RSVRAQRHTDMPKAQKEVHLKNTSRGNTGNRNYRM) is e peptide. The segment covering 96–109 (RHTDMPKAQKEVHL) has biased composition (basic and acidic residues). The segment covering 110-124 (KNTSRGNTGNRNYRM) has biased composition (polar residues).

This sequence belongs to the insulin family.

It is found in the secreted. Functionally, the insulin-like growth factors, isolated from plasma, are structurally and functionally related to insulin but have a much higher growth-promoting activity. Acts as a ligand for IGF1R. Binds to the alpha subunit of IGF1R, leading to the activation of the intrinsic tyrosine kinase activity which autophosphorylates tyrosine residues in the beta subunit thus initiatiating a cascade of down-stream signaling events leading to activation of the PI3K-AKT/PKB and the Ras-MAPK pathways. Binds to integrins. Its binding to integrins and subsequent ternary complex formation with integrins and IGFR1 are essential for IGF1 signaling. This is Insulin-like growth factor 1 from Coturnix japonica (Japanese quail).